Here is an 88-residue protein sequence, read N- to C-terminus: Small ribosomal subunit protein bS20 (88 aa).

The protein belongs to the bacterial ribosomal protein bS20 family.

Functionally, binds directly to 16S ribosomal RNA. This is Small ribosomal subunit protein bS20 from Syntrophomonas wolfei subsp. wolfei (strain DSM 2245B / Goettingen).